A 437-amino-acid polypeptide reads, in one-letter code: MFGFGRLSAEGKVGIASGVVFFSMLISRTLISERVDKGTRALLFRVQFLLFINSLLLLGSLYLWKRVVKRLCGARAAPSVPQRCWRIIVLLFLALVHGSYLCMFFLVDTEPHWLSLLSFSCLGVYVILLFFLFVFGCLNRLGKLLSRSRSAEEAVASGSFRQTVLALIITAVLAVYGLVNAAQPPKVVDVEIPVEKLPESLNGLRLVLLSDIHLGPTVGRSKLQRIVSMVNELNPDVVVIVGDLTDSQVSRLRSAAEPLGQMKPRLGSYFATGNHDYYTADVEGWFELLHSMGIEALHNSHAKVFRPERTEDWICLAGIDDLEARMLRYPGHGMDVEKALNGCTTEGPIILLAHQPHAAKQALQQRPDISLVLSGHTHAGQLFPLTILAFLMNPFFCGLYRVSEHTMVYVTPGTGYYGIPMRIASRSEITNIVLKQA.

Helical transmembrane passes span 7-27, 41-61, 87-107, 116-136, and 164-184; these read LSAE…MLIS, ALLF…LGSL, IIVL…FFLV, LLSF…FVFG, and VLAL…AAQP. D211, H213, D243, N274, H376, and H378 together coordinate a divalent metal cation.

It belongs to the metallophosphoesterase superfamily. LOC643853 family. The cofactor is a divalent metal cation.

The protein resides in the membrane. In Danio rerio (Zebrafish), this protein is Transmembrane protein with metallophosphoesterase domain (tmppe).